The primary structure comprises 152 residues: Aspartate carbamoyltransferase regulatory chain (152 aa).

Residues cysteine 109, cysteine 114, cysteine 138, and cysteine 141 each coordinate Zn(2+).

Belongs to the PyrI family. As to quaternary structure, contains catalytic and regulatory chains. The cofactor is Zn(2+).

Involved in allosteric regulation of aspartate carbamoyltransferase. The chain is Aspartate carbamoyltransferase regulatory chain from Thermoplasma volcanium (strain ATCC 51530 / DSM 4299 / JCM 9571 / NBRC 15438 / GSS1).